The primary structure comprises 326 residues: Protoheme IX farnesyltransferase (326 aa).

8 helical membrane-spanning segments follow: residues 35-55 (LIPL…GWPL), 60-80 (LICT…LNCL), 106-126 (TAFI…VSGV), 129-149 (LAAG…TALL), 157-177 (IVVG…AATG), 185-205 (WLFA…ALLL), 238-258 (VLLS…YGLM), and 289-309 (WSIL…SALA).

Belongs to the UbiA prenyltransferase family. Protoheme IX farnesyltransferase subfamily.

The protein localises to the cell inner membrane. It carries out the reaction heme b + (2E,6E)-farnesyl diphosphate + H2O = Fe(II)-heme o + diphosphate. The protein operates within porphyrin-containing compound metabolism; heme O biosynthesis; heme O from protoheme: step 1/1. In terms of biological role, converts heme B (protoheme IX) to heme O by substitution of the vinyl group on carbon 2 of heme B porphyrin ring with a hydroxyethyl farnesyl side group. This is Protoheme IX farnesyltransferase from Synechococcus sp. (strain CC9902).